Consider the following 342-residue polypeptide: Putative gluconeogenesis factor (342 aa).

A disordered region spans residues 318–342 (SEPPVAATQEIPIDGGRPRGDDAWR). T325 bears the Phosphothreonine mark. The span at 333–342 (GRPRGDDAWR) shows a compositional bias: basic and acidic residues.

The protein belongs to the gluconeogenesis factor family. In terms of processing, phosphorylated by PknA and/or PknB.

It is found in the cytoplasm. Functionally, required for morphogenesis under gluconeogenic growth conditions. This chain is Putative gluconeogenesis factor, found in Mycobacterium tuberculosis (strain CDC 1551 / Oshkosh).